Here is a 221-residue protein sequence, read N- to C-terminus: Lactate racemization regulatory protein (221 aa).

In terms of domain architecture, HTH crp-type spans 139–213 (NGKKGAICAF…NHKFIIQDVS (75 aa)). The H-T-H motif DNA-binding region spans 172 to 192 (NDDIAGFCGISSRSSVNRMLK).

As to quaternary structure, multimerizes on DNA. Multimerization is required for transcription activation.

With respect to regulation, L-lactate acts as a positive effector on the binding and multimerization of LarR on DNA, while D-lactate antagonizes the positive effect of L-lactate. Its function is as follows. Positive transcriptional regulator that is absolutely required for the expression of lactate racemase (Lar) activity. Controls Lar expression by sensing the L-/D-lactate ration. Binds to a 16-bp palindromic sequence (Lar box motif) that is present in the larR-larA intergenic region, allowing transcription of the larABCDE operon. This chain is Lactate racemization regulatory protein, found in Lactiplantibacillus plantarum (strain ATCC BAA-793 / NCIMB 8826 / WCFS1) (Lactobacillus plantarum).